The primary structure comprises 112 residues: MEKDPKERREEEQAPVQNEEACPMGGGEGPKPRENVRGDWDPPAQDFREDMPNGLVNNIDIIDGDADDMERFMEEMRELRRKIRELQLRYSLRILIGDPPHHDHHDEFCLMP.

Composition is skewed to basic and acidic residues over residues 1–12 (MEKDPKERREEE) and 30–51 (PKPR…REDM). The disordered stretch occupies residues 1–56 (MEKDPKERREEEQAPVQNEEACPMGGGEGPKPRENVRGDWDPPAQDFREDMPNGLV). The segment at 101–105 (HHDHH) is his cluster. Cys-109 serves as a coordination point for Zn(2+).

It belongs to the BEX family. In terms of processing, ubiquitinated. Degraded by the proteasome.

The protein resides in the cytoplasm. This Bos taurus (Bovine) protein is Protein BEX5 (BEX5).